A 131-amino-acid chain; its full sequence is Small ribosomal subunit protein uS8 (131 aa).

It belongs to the universal ribosomal protein uS8 family. In terms of assembly, part of the 30S ribosomal subunit. Contacts proteins S5 and S12.

In terms of biological role, one of the primary rRNA binding proteins, it binds directly to 16S rRNA central domain where it helps coordinate assembly of the platform of the 30S subunit. The sequence is that of Small ribosomal subunit protein uS8 from Chlorobium chlorochromatii (strain CaD3).